The chain runs to 361 residues: Holliday junction branch migration complex subunit RuvB (361 aa).

Residues 1 to 21 form a disordered region; that stretch reads MHKDEDQRLLGAVPLPNDPDR. Positions 1 to 184 are large ATPase domain (RuvB-L); the sequence is MHKDEDQRLL…FGIPIRLNFY (184 aa). Residues Leu-23, Arg-24, Gly-65, Lys-68, Thr-69, Thr-70, 131 to 133, Arg-174, Tyr-184, and Arg-221 each bind ATP; that span reads EDY. Thr-69 is a binding site for Mg(2+). The small ATPAse domain (RuvB-S) stretch occupies residues 185-255; it reads TIEELEYIVQ…IADEALSRLE (71 aa). The segment at 258 to 361 is head domain (RuvB-H); the sequence is HLGLDPLDRR…QTVLWDEADD (104 aa). The DNA site is built by Arg-294, Arg-313, and Arg-318.

The protein belongs to the RuvB family. As to quaternary structure, homohexamer. Forms an RuvA(8)-RuvB(12)-Holliday junction (HJ) complex. HJ DNA is sandwiched between 2 RuvA tetramers; dsDNA enters through RuvA and exits via RuvB. An RuvB hexamer assembles on each DNA strand where it exits the tetramer. Each RuvB hexamer is contacted by two RuvA subunits (via domain III) on 2 adjacent RuvB subunits; this complex drives branch migration. In the full resolvosome a probable DNA-RuvA(4)-RuvB(12)-RuvC(2) complex forms which resolves the HJ.

Its subcellular location is the cytoplasm. It catalyses the reaction ATP + H2O = ADP + phosphate + H(+). In terms of biological role, the RuvA-RuvB-RuvC complex processes Holliday junction (HJ) DNA during genetic recombination and DNA repair, while the RuvA-RuvB complex plays an important role in the rescue of blocked DNA replication forks via replication fork reversal (RFR). RuvA specifically binds to HJ cruciform DNA, conferring on it an open structure. The RuvB hexamer acts as an ATP-dependent pump, pulling dsDNA into and through the RuvAB complex. RuvB forms 2 homohexamers on either side of HJ DNA bound by 1 or 2 RuvA tetramers; 4 subunits per hexamer contact DNA at a time. Coordinated motions by a converter formed by DNA-disengaged RuvB subunits stimulates ATP hydrolysis and nucleotide exchange. Immobilization of the converter enables RuvB to convert the ATP-contained energy into a lever motion, pulling 2 nucleotides of DNA out of the RuvA tetramer per ATP hydrolyzed, thus driving DNA branch migration. The RuvB motors rotate together with the DNA substrate, which together with the progressing nucleotide cycle form the mechanistic basis for DNA recombination by continuous HJ branch migration. Branch migration allows RuvC to scan DNA until it finds its consensus sequence, where it cleaves and resolves cruciform DNA. This is Holliday junction branch migration complex subunit RuvB from Bartonella henselae (strain ATCC 49882 / DSM 28221 / CCUG 30454 / Houston 1) (Rochalimaea henselae).